A 432-amino-acid polypeptide reads, in one-letter code: Sonic hedgehog protein (432 aa).

Positions 1–26 are cleaved as a signal peptide; it reads MDEMILLRRVLLAGFICALLVPSGLS. A lipid anchor (N-palmitoyl cysteine) is attached at Cys27. The Cardin-Weintraub signature appears at 35-41; that stretch reads TRKRFKK. Residues Glu92, Glu93, Asp98, Thr128, Glu129, Asp132, and Asp134 each coordinate Ca(2+). Residues His143, Asp150, and His185 each coordinate Zn(2+). Gly200 is lipidated: Cholesterol glycine ester.

Belongs to the hedgehog family. Interacts with HHATL/GUP1 which negatively regulates HHAT-mediated palmitoylation of the SHH N-terminus. Interacts with BOC and CDON. Interacts with HHIP. Interacts with DISP1 via its cholesterol anchor. Interacts with SCUBE2. As to quaternary structure, multimer. Post-translationally, the C-terminal domain displays an autoproteolysis activity and a cholesterol transferase activity. Both activities result in the cleavage of the full-length protein and covalent attachment of a cholesterol moiety to the C-terminal of the newly generated N-terminal fragment (ShhN). Cholesterylation is required for the sonic hedgehog protein N-product targeting to lipid rafts and multimerization. ShhN is the active species in both local and long-range signaling, whereas the C-product (ShhC) is degraded in the reticulum endoplasmic. N-palmitoylation by HHAT of ShhN is required for sonic hedgehog protein N-product multimerization and full activity. It is a prerequisite for the membrane-proximal positioning and the subsequent shedding of this N-terminal peptide. In terms of processing, the lipidated N- and C-terminal peptides of ShhNp can be cleaved (shedding). The N-terminal palmitoylated peptide is cleaved at the Cardin-Weintraub (CW) motif site. The cleavage reduced the interactions with heparan sulfate. The cleavage is enhanced by SCUBE2.

The protein localises to the endoplasmic reticulum membrane. It localises to the golgi apparatus membrane. The protein resides in the cell membrane. It catalyses the reaction glycyl-L-cysteinyl-[protein] + cholesterol + H(+) = [protein]-C-terminal glycyl cholesterol ester + N-terminal L-cysteinyl-[protein]. The C-terminal part of the sonic hedgehog protein precursor displays an autoproteolysis and a cholesterol transferase activity. Both activities result in the cleavage of the full-length protein into two parts (ShhN and ShhC) followed by the covalent attachment of a cholesterol moiety to the C-terminal of the newly generated ShhN. Both activities occur in the endoplasmic reticulum. Once cleaved, ShhC is degraded in the endoplasmic reticulum. Its function is as follows. The dually lipidated sonic hedgehog protein N-product (ShhNp) is a morphogen which is essential for a variety of patterning events during development. Induces ventral cell fate in the neural tube and somites. Involved in the patterning of the anterior-posterior axis of the developing limb bud. Essential for axon guidance. Binds to the patched (PTCH1) receptor, which functions in association with smoothened (SMO), to activate the transcription of target genes. In the absence of SHH, PTCH1 represses the constitutive signaling activity of SMO. The protein is Sonic hedgehog protein of Cynops pyrrhogaster (Japanese fire-bellied newt).